Reading from the N-terminus, the 107-residue chain is Nitrogenase-stabilizing/protective protein NifW (107 aa).

Belongs to the NifW family. As to quaternary structure, homotrimer; associates with NifD.

In terms of biological role, may protect the nitrogenase Fe-Mo protein from oxidative damage. This Gloeothece citriformis (strain PCC 7424) (Cyanothece sp. (strain PCC 7424)) protein is Nitrogenase-stabilizing/protective protein NifW.